A 410-amino-acid chain; its full sequence is MKEELIERFTRYVKIDTQSNEDSHTVPTTPGQIEFGKLLVEELKEVGLTEVTMDDNGYVMATLPANTDKDVPVIGFLAHLDTATDFTGKNVKPQIHENFDGNAITLNEELNVVLTPEQFPELPSYKGHTIITTDGTTLLGADDKAGLTEIMVAMNYLIHNPQIKHGKIRVAFTPDEEIGRGPAHFDVEAFGASFAYTMDGGPLGGLEYESFNAAGAKLTFNGTNTHPGTAKNKMRNATKLAMEFNGHLPVEEAPEYTEGYEGFYHLLSLNGDVEQSKAYYIIRDFDRKNFEARKNTIENIVKQMQEKYGQDAVVLEMNDQYYNMLEKIEPVREIVDIAYEAMKSLNIEPNIHPIRGGTDGSQLSYMGLPTPNIFTGGENYHGKFEYVSVDVMEKAVQVIIEIARRFEEQA.

Residue His-79 participates in Zn(2+) binding. The active site involves Asp-81. Asp-142 lines the Zn(2+) pocket. Glu-176 functions as the Proton acceptor in the catalytic mechanism. Positions 177, 199, and 381 each coordinate Zn(2+).

This sequence belongs to the peptidase M20B family. Zn(2+) serves as cofactor.

It localises to the cytoplasm. It catalyses the reaction Release of the N-terminal residue from a tripeptide.. In terms of biological role, cleaves the N-terminal amino acid of tripeptides. In Bacillus thuringiensis (strain Al Hakam), this protein is Peptidase T.